The primary structure comprises 72 residues: Large ribosomal subunit protein bL31 (72 aa).

Zn(2+)-binding residues include Cys-16, Cys-18, Cys-37, and Cys-40.

This sequence belongs to the bacterial ribosomal protein bL31 family. Type A subfamily. In terms of assembly, part of the 50S ribosomal subunit. Zn(2+) serves as cofactor.

Binds the 23S rRNA. In Pseudomonas fluorescens (strain Pf0-1), this protein is Large ribosomal subunit protein bL31.